A 448-amino-acid polypeptide reads, in one-letter code: Probable rhamnogalacturonase E (448 aa).

The first 22 residues, 1 to 22 (MTWSTSFLVATSLLSIINSVHA), serve as a signal peptide directing secretion. An intrachain disulfide couples Cys-43 to Cys-69. Residues Asn-54, Asn-92, and Asn-131 are each glycosylated (N-linked (GlcNAc...) asparagine). The active-site Proton donor is the Asp-221. A disulfide bond links Cys-223 and Cys-240. Asn-256 and Asn-284 each carry an N-linked (GlcNAc...) asparagine glycan. His-296 is a catalytic residue. N-linked (GlcNAc...) asparagine glycosylation is found at Asn-323 and Asn-328. 2 disulfide bridges follow: Cys-346/Cys-352 and Cys-374/Cys-382.

The protein belongs to the glycosyl hydrolase 28 family.

The protein resides in the secreted. Its function is as follows. Pectinolytic enzymes consist of four classes of enzymes: pectine lyase, polygalacturonase, pectin methylesterase and rhamnogalacturonase. Hydrolyzes alpha-D-galacturonopyranosyl-(1,2)-alpha-L-rhamnopyranosyl linkages in the backbone of the hairy regions of pectins. This Aspergillus niger (strain ATCC MYA-4892 / CBS 513.88 / FGSC A1513) protein is Probable rhamnogalacturonase E (rhgE).